We begin with the raw amino-acid sequence, 173 residues long: Beta-defensin 129 (173 aa).

Residues 1–19 (MKLLFPIFASLMLQYKVNT) form the signal peptide. 3 cysteine pairs are disulfide-bonded: Cys-27–Cys-53, Cys-34–Cys-48, and Cys-38–Cys-54. The tract at residues 144 to 173 (STKSNIKESRDSATASPPPAPPPPNTLPTP) is disordered. Over residues 159–173 (SPPPAPPPPNTLPTP) the composition is skewed to pro residues.

This sequence belongs to the beta-defensin family.

The protein resides in the secreted. Functionally, has antibacterial activity. The protein is Beta-defensin 129 (DEFB129) of Hylobates lar (Lar gibbon).